Consider the following 884-residue polypeptide: Alanine--tRNA ligase (884 aa).

Residues His565, His569, Cys672, and His676 each contribute to the Zn(2+) site.

The protein belongs to the class-II aminoacyl-tRNA synthetase family. Zn(2+) serves as cofactor.

It is found in the cytoplasm. It catalyses the reaction tRNA(Ala) + L-alanine + ATP = L-alanyl-tRNA(Ala) + AMP + diphosphate. Its function is as follows. Catalyzes the attachment of alanine to tRNA(Ala) in a two-step reaction: alanine is first activated by ATP to form Ala-AMP and then transferred to the acceptor end of tRNA(Ala). Also edits incorrectly charged Ser-tRNA(Ala) and Gly-tRNA(Ala) via its editing domain. In Sphingopyxis alaskensis (strain DSM 13593 / LMG 18877 / RB2256) (Sphingomonas alaskensis), this protein is Alanine--tRNA ligase.